Consider the following 1237-residue polypeptide: U3 small nucleolar RNA-associated protein 22 (1237 aa).

The interval 1-78 (MATSVKRKAS…TNTAATRHNG (78 aa)) is disordered. 2 positions are modified to phosphoserine: Ser10 and Ser58. Position 60 is a phosphothreonine (Thr60). Polar residues predominate over residues 61–78 (SPESNEVATNTAATRHNG). Residue Ser64 is modified to Phosphoserine.

The protein belongs to the NRAP family. In terms of assembly, interacts with snoRNA U3. Interacts with MPP10. Component of the ribosomal small subunit (SSU) processome composed of at least 40 protein subunits and snoRNA U3. Interacts with UBP10.

Its subcellular location is the nucleus. It localises to the nucleolus. Its function is as follows. Involved in nucleolar processing of pre-18S ribosomal RNA and ribosome assembly. The sequence is that of U3 small nucleolar RNA-associated protein 22 (UTP22) from Saccharomyces cerevisiae (strain ATCC 204508 / S288c) (Baker's yeast).